We begin with the raw amino-acid sequence, 245 residues long: MMKKRVKRVLFKISGEALSDASSSDKISEERLSRLIAELKVVRNADVEVAVVIGGGNILRGLSQSQNLQINRVSADQMGMLATLINGMALADALKTEDVPNLLTSTLSCPQLAELYNPQKASDALSQGKVVICTMGAGAPYLTTDTGAALRACELKVDVLLKATMHVDGVYDRDPREFADAVRYDHISYRDFLSQGLGAIDPSAVSLCMEAGIPIRMFSFTKHSLEEAIFNTVGTVISSTEGGQL.

ATP is bound at residue 12 to 15 (KISG). A UMP-binding site is contributed by Gly-55. ATP contacts are provided by Gly-56 and Arg-60. UMP is bound by residues Asp-76 and 137-144 (AGAPYLTT). 3 residues coordinate ATP: Thr-164, Tyr-171, and Asp-174.

This sequence belongs to the UMP kinase family. Homohexamer.

The protein resides in the cytoplasm. It carries out the reaction UMP + ATP = UDP + ADP. Its pathway is pyrimidine metabolism; CTP biosynthesis via de novo pathway; UDP from UMP (UMPK route): step 1/1. Inhibited by UTP. In terms of biological role, catalyzes the reversible phosphorylation of UMP to UDP. The chain is Uridylate kinase from Chlamydia muridarum (strain MoPn / Nigg).